Here is a 258-residue protein sequence, read N- to C-terminus: 1-(5-phosphoribosyl)-5-[(5-phosphoribosylamino)methylideneamino] imidazole-4-carboxamide isomerase (258 aa).

The active-site Proton acceptor is the Asp-9. The Proton donor role is filled by Asp-131.

Belongs to the HisA/HisF family.

The protein resides in the cytoplasm. It catalyses the reaction 1-(5-phospho-beta-D-ribosyl)-5-[(5-phospho-beta-D-ribosylamino)methylideneamino]imidazole-4-carboxamide = 5-[(5-phospho-1-deoxy-D-ribulos-1-ylimino)methylamino]-1-(5-phospho-beta-D-ribosyl)imidazole-4-carboxamide. The protein operates within amino-acid biosynthesis; L-histidine biosynthesis; L-histidine from 5-phospho-alpha-D-ribose 1-diphosphate: step 4/9. In Salinibacter ruber (strain DSM 13855 / M31), this protein is 1-(5-phosphoribosyl)-5-[(5-phosphoribosylamino)methylideneamino] imidazole-4-carboxamide isomerase.